Consider the following 302-residue polypeptide: tRNA dimethylallyltransferase (302 aa).

9–16 contacts ATP; the sequence is GPTAAGKS. Substrate is bound at residue 11–16; it reads TAAGKS. Residues 34 to 37 are interaction with substrate tRNA; it reads DSRQ.

This sequence belongs to the IPP transferase family. As to quaternary structure, monomer. Mg(2+) is required as a cofactor.

The catalysed reaction is adenosine(37) in tRNA + dimethylallyl diphosphate = N(6)-dimethylallyladenosine(37) in tRNA + diphosphate. Functionally, catalyzes the transfer of a dimethylallyl group onto the adenine at position 37 in tRNAs that read codons beginning with uridine, leading to the formation of N6-(dimethylallyl)adenosine (i(6)A). The polypeptide is tRNA dimethylallyltransferase (Gloeobacter violaceus (strain ATCC 29082 / PCC 7421)).